The following is a 435-amino-acid chain: GTPase Obg (435 aa).

An Obg domain is found at 6–164; the sequence is ADFVDRVKIF…RWLELELKIL (159 aa). The region spanning 165–335 is the OBG-type G domain; sequence ADVGLVGYPN…LVSKLASIVR (171 aa). Residues 171–178, 196–200, 217–220, 287–290, and 316–318 each bind GTP; these read GYPNVGKS, FTTLI, DIPG, NKID, and SAL. Positions 178 and 198 each coordinate Mg(2+). In terms of domain architecture, OCT spans 357 to 435; the sequence is RRLPEKFHLE…IGDFEFEYRE (79 aa).

This sequence belongs to the TRAFAC class OBG-HflX-like GTPase superfamily. OBG GTPase family. In terms of assembly, monomer. Mg(2+) is required as a cofactor.

It localises to the cytoplasm. Its function is as follows. An essential GTPase which binds GTP, GDP and possibly (p)ppGpp with moderate affinity, with high nucleotide exchange rates and a fairly low GTP hydrolysis rate. Plays a role in control of the cell cycle, stress response, ribosome biogenesis and in those bacteria that undergo differentiation, in morphogenesis control. The sequence is that of GTPase Obg from Thermotoga sp. (strain RQ2).